The chain runs to 377 residues: MATKKKSSAANKGDDRQKALDAAMAMIEKDFGKGAVMRLGDDDRPPIQAISSGNTAIDIALGVGGFPRGRIVEIYGPESSGKTTVALHAIASAQKTGGIAAFIDAEHALDPEYARLLGVDTDNLLVSQPDTGEQALEIADMLVRSGAIDIIVIDSVAALTPKAEIEGEMGDSHVGLQARLMSQALRKMTGALYNSGTTAIFINQLREKIGVMFGSPETTTGGKALKFYASVRCDIRRIQTLKDGQDAIGNRTKLKVVKNKVSPPFKIAEFDIMYGEGISRESSIIDLGVEHGFIKKSGSWFTYEGDQLGQGKEKARNFLKDNPDLADEIEKKIFVKLGVGAAAAEAGEDVAMDVPGADDPLTDEAVDLVPNVDFDDD.

ATP is bound at residue 76–83 (GPESSGKT).

It belongs to the RecA family.

It localises to the cytoplasm. In terms of biological role, can catalyze the hydrolysis of ATP in the presence of single-stranded DNA, the ATP-dependent uptake of single-stranded DNA by duplex DNA, and the ATP-dependent hybridization of homologous single-stranded DNAs. It interacts with LexA causing its activation and leading to its autocatalytic cleavage. This Corynebacterium aurimucosum (strain ATCC 700975 / DSM 44827 / CIP 107346 / CN-1) (Corynebacterium nigricans) protein is Protein RecA.